Reading from the N-terminus, the 492-residue chain is Protein nucleotidyltransferase YdiU (492 aa).

Positions 91, 93, 94, 114, 126, 127, 177, and 184 each coordinate ATP. Residue D253 is the Proton acceptor of the active site. Residues N254 and D263 each contribute to the Mg(2+) site. Residue D263 participates in ATP binding.

This sequence belongs to the SELO family. Requires Mg(2+) as cofactor. It depends on Mn(2+) as a cofactor.

The catalysed reaction is L-seryl-[protein] + ATP = 3-O-(5'-adenylyl)-L-seryl-[protein] + diphosphate. It carries out the reaction L-threonyl-[protein] + ATP = 3-O-(5'-adenylyl)-L-threonyl-[protein] + diphosphate. The enzyme catalyses L-tyrosyl-[protein] + ATP = O-(5'-adenylyl)-L-tyrosyl-[protein] + diphosphate. It catalyses the reaction L-histidyl-[protein] + UTP = N(tele)-(5'-uridylyl)-L-histidyl-[protein] + diphosphate. The catalysed reaction is L-seryl-[protein] + UTP = O-(5'-uridylyl)-L-seryl-[protein] + diphosphate. It carries out the reaction L-tyrosyl-[protein] + UTP = O-(5'-uridylyl)-L-tyrosyl-[protein] + diphosphate. Its function is as follows. Nucleotidyltransferase involved in the post-translational modification of proteins. It can catalyze the addition of adenosine monophosphate (AMP) or uridine monophosphate (UMP) to a protein, resulting in modifications known as AMPylation and UMPylation. In Maridesulfovibrio salexigens (strain ATCC 14822 / DSM 2638 / NCIMB 8403 / VKM B-1763) (Desulfovibrio salexigens), this protein is Protein nucleotidyltransferase YdiU.